We begin with the raw amino-acid sequence, 570 residues long: Protein NRT1/ PTR FAMILY 8.2 (570 aa).

The residue at position 99 (threonine 99) is a Phosphothreonine. 10 helical membrane passes run isoleucine 100–valine 120, alanine 136–isoleucine 156, phenylalanine 182–valine 202, tryptophan 210–alanine 230, isoleucine 335–leucine 355, isoleucine 370–tyrosine 390, isoleucine 414–alanine 434, isoleucine 454–glycine 474, alanine 493–valine 513, and tyrosine 537–alanine 557.

This sequence belongs to the major facilitator superfamily. Proton-dependent oligopeptide transporter (POT/PTR) (TC 2.A.17) family. In terms of tissue distribution, expressed in developing and germinating pollen grains and ovules.

It is found in the cell membrane. Its function is as follows. Peptide transporter. Mediates the transport of di- and tripeptides. High affinity transporter. Involved in the uptake of peptides during pollen germination and tube growth. The protein is Protein NRT1/ PTR FAMILY 8.2 (NPF8.2) of Arabidopsis thaliana (Mouse-ear cress).